Consider the following 375-residue polypeptide: Trichodiene synthase (375 aa).

It belongs to the trichodiene synthase family.

The enzyme catalyses (2E,6E)-farnesyl diphosphate = trichodiene + diphosphate. The protein operates within sesquiterpene biosynthesis; trichothecene biosynthesis. In terms of biological role, TS is a member of the terpene cyclase group of enzymes. It catalyzes the isomerization and cyclization of farnesyl pyro-phosphate to form trichodiene, the first cyclic intermediate in the biosynthetic pathway for trichothecenes. It serves to branch trichothecene biosynthesis from the isoprenoid pathway. The chain is Trichodiene synthase (TRI5) from Fusarium mesoamericanum.